The primary structure comprises 196 residues: Imidazoleglycerol-phosphate dehydratase (196 aa).

This sequence belongs to the imidazoleglycerol-phosphate dehydratase family.

Its subcellular location is the cytoplasm. It carries out the reaction D-erythro-1-(imidazol-4-yl)glycerol 3-phosphate = 3-(imidazol-4-yl)-2-oxopropyl phosphate + H2O. It participates in amino-acid biosynthesis; L-histidine biosynthesis; L-histidine from 5-phospho-alpha-D-ribose 1-diphosphate: step 6/9. The chain is Imidazoleglycerol-phosphate dehydratase from Dehalococcoides mccartyi (strain ATCC BAA-2266 / KCTC 15142 / 195) (Dehalococcoides ethenogenes (strain 195)).